We begin with the raw amino-acid sequence, 347 residues long: uncharacterized protein (347 aa).

The RING-type zinc-finger motif lies at 5–44 (CTICHNTPNRPVRLDCNHEFCYICIKGSIQNDMLNCAVCR). In terms of domain architecture, WWE spans 244 to 321 (NVQANFNVAR…NLDAWRQIKR (78 aa)).

This is an uncharacterized protein from Caenorhabditis elegans.